A 63-amino-acid chain; its full sequence is Large ribosomal subunit protein uL30 (63 aa).

Belongs to the universal ribosomal protein uL30 family. Part of the 50S ribosomal subunit.

This is Large ribosomal subunit protein uL30 from Rickettsia akari (strain Hartford).